The primary structure comprises 739 residues: NAD(P)H-quinone oxidoreductase subunit 5, chloroplastic (739 aa).

Helical transmembrane passes span 9–29 (WVIPLLPLPVIMSMGFGLILI), 39–59 (IWAFPSVLLLSIAMVFSVQLS), 89–109 (IDPLTSIMLILITTVGILVLI), 125–145 (FVYISFFNTSMLGLVTSSNLI), 147–167 (IYFFWELVGMCSYLLIGFWFT), 185–205 (GDFGLLLGILGFFWITGSLEF), 219–239 (NGINSLLTTLCAFLLFLGAVA), 258–278 (TPISALIHAATMVAAGIFLLA), 280–300 (LLPLFISLPLIMSFISLVGTI), 327–347 (LGYMMLALGIGSYQAALFHLI), 354–374 (ALLFLGSGSVIHSMEPLVGYS), 396–416 (TTFLWGTLSLCGIPPLACFWS), 425–445 (WLYSPFFGIIASFTAGLTAFY), 542–562 (LFPLLILLLFTLFIGFIGISF), 610–630 (TLAIFGLFIAYIFYGSAYSFF), and 719–739 (ISSYLFFFLCYVSVFLFFFLS).

The protein belongs to the complex I subunit 5 family. NDH is composed of at least 16 different subunits, 5 of which are encoded in the nucleus.

Its subcellular location is the plastid. It is found in the chloroplast thylakoid membrane. The catalysed reaction is a plastoquinone + NADH + (n+1) H(+)(in) = a plastoquinol + NAD(+) + n H(+)(out). The enzyme catalyses a plastoquinone + NADPH + (n+1) H(+)(in) = a plastoquinol + NADP(+) + n H(+)(out). In terms of biological role, NDH shuttles electrons from NAD(P)H:plastoquinone, via FMN and iron-sulfur (Fe-S) centers, to quinones in the photosynthetic chain and possibly in a chloroplast respiratory chain. The immediate electron acceptor for the enzyme in this species is believed to be plastoquinone. Couples the redox reaction to proton translocation, and thus conserves the redox energy in a proton gradient. This is NAD(P)H-quinone oxidoreductase subunit 5, chloroplastic (ndhF) from Hordeum vulgare (Barley).